The primary structure comprises 472 residues: Glutamate--tRNA ligase (472 aa).

A 'HIGH' region motif is present at residues 9–19 (PSPTGYLHVGG). Positions 98, 100, 125, and 127 each coordinate Zn(2+). The 'KMSKS' region signature appears at 237 to 241 (KLSKR). Lys240 serves as a coordination point for ATP.

It belongs to the class-I aminoacyl-tRNA synthetase family. Glutamate--tRNA ligase type 1 subfamily. In terms of assembly, monomer. Zn(2+) serves as cofactor.

Its subcellular location is the cytoplasm. The enzyme catalyses tRNA(Glu) + L-glutamate + ATP = L-glutamyl-tRNA(Glu) + AMP + diphosphate. In terms of biological role, catalyzes the attachment of glutamate to tRNA(Glu) in a two-step reaction: glutamate is first activated by ATP to form Glu-AMP and then transferred to the acceptor end of tRNA(Glu). This chain is Glutamate--tRNA ligase, found in Klebsiella pneumoniae subsp. pneumoniae (strain ATCC 700721 / MGH 78578).